The chain runs to 186 residues: Ribosome-recycling factor (186 aa).

The protein belongs to the RRF family.

It is found in the cytoplasm. Functionally, responsible for the release of ribosomes from messenger RNA at the termination of protein biosynthesis. May increase the efficiency of translation by recycling ribosomes from one round of translation to another. The sequence is that of Ribosome-recycling factor from Rickettsia massiliae (strain Mtu5).